The primary structure comprises 790 residues: Penicillin-binding protein 1A (790 aa).

The Cytoplasmic segment spans residues 1-6 (MYKSLF). A helical; Signal-anchor for type II membrane protein transmembrane segment spans residues 7–27 (FCLKIFAVLILVGCGITAYII). Residues 28-790 (YHYSRDLPDY…SKEDQSQEIY (763 aa)) are Periplasmic-facing. The transglycosylase stretch occupies residues 49–220 (TRIYSHDGKL…SELNPERNYA (172 aa)). Glu87 serves as the catalytic Proton donor; for transglycosylase activity. A transpeptidase region spans residues 398 to 711 (DVIVVEPIKD…SNVVLPIFID (314 aa)). Ser457 acts as the Acyl-ester intermediate; for transpeptidase activity in catalysis.

This sequence in the N-terminal section; belongs to the glycosyltransferase 51 family. The protein in the C-terminal section; belongs to the transpeptidase family.

The protein localises to the cell inner membrane. The catalysed reaction is [GlcNAc-(1-&gt;4)-Mur2Ac(oyl-L-Ala-gamma-D-Glu-L-Lys-D-Ala-D-Ala)](n)-di-trans,octa-cis-undecaprenyl diphosphate + beta-D-GlcNAc-(1-&gt;4)-Mur2Ac(oyl-L-Ala-gamma-D-Glu-L-Lys-D-Ala-D-Ala)-di-trans,octa-cis-undecaprenyl diphosphate = [GlcNAc-(1-&gt;4)-Mur2Ac(oyl-L-Ala-gamma-D-Glu-L-Lys-D-Ala-D-Ala)](n+1)-di-trans,octa-cis-undecaprenyl diphosphate + di-trans,octa-cis-undecaprenyl diphosphate + H(+). It catalyses the reaction Preferential cleavage: (Ac)2-L-Lys-D-Ala-|-D-Ala. Also transpeptidation of peptidyl-alanyl moieties that are N-acyl substituents of D-alanine.. Its pathway is cell wall biogenesis; peptidoglycan biosynthesis. Its function is as follows. Cell wall formation. Synthesis of cross-linked peptidoglycan from the lipid intermediates. The enzyme has a penicillin-insensitive transglycosylase N-terminal domain (formation of linear glycan strands) and a penicillin-sensitive transpeptidase C-terminal domain (cross-linking of the peptide subunits). The chain is Penicillin-binding protein 1A (mrcA) from Rickettsia felis (strain ATCC VR-1525 / URRWXCal2) (Rickettsia azadi).